The following is a 328-amino-acid chain: MLPDPLCDGFGRDVRYLRVSVTDRCDLRCSYCMKEDVTFLPRNQVLSLEELDRLGVRKLRVTGGEPLVRRGIGTFFAAMGTHLRAGRLDELTLTTNGTQLAAHAQSLAECGVKRVNVSLDTLQAEKYARLTRFGRIEQVFAGIAAAQAAGLRVKLNAMALKGVNDDEIFALTDWAAAHHCDLTFIELMPMGDIPAGTRLDQFWPLDDVRAHLETRFRLIDNGLNTGGPARYVTVAQTGQRIGFISPLSHNFCTSCNRVRLTCKGELYTCLGQEGSSDLRPVLRAGVEGEALAREIRAAIARKPAGHAFGYGPCSVAGQMVRGMNHTGG.

Positions G9–A229 constitute a Radical SAM core domain. Residue R18 coordinates GTP. 2 residues coordinate [4Fe-4S] cluster: C25 and C29. Y31 is an S-adenosyl-L-methionine binding site. C32 provides a ligand contact to [4Fe-4S] cluster. Residue R60 participates in GTP binding. S-adenosyl-L-methionine is bound at residue G64. T94 contacts GTP. Position 118 (S118) interacts with S-adenosyl-L-methionine. Residue K154 participates in GTP binding. M188 lines the S-adenosyl-L-methionine pocket. 2 residues coordinate [4Fe-4S] cluster: C252 and C255. Residue R257–R259 participates in GTP binding. A [4Fe-4S] cluster-binding site is contributed by C269.

This sequence belongs to the radical SAM superfamily. MoaA family. Monomer and homodimer. Requires [4Fe-4S] cluster as cofactor.

It catalyses the reaction GTP + AH2 + S-adenosyl-L-methionine = (8S)-3',8-cyclo-7,8-dihydroguanosine 5'-triphosphate + 5'-deoxyadenosine + L-methionine + A + H(+). It participates in cofactor biosynthesis; molybdopterin biosynthesis. Catalyzes the cyclization of GTP to (8S)-3',8-cyclo-7,8-dihydroguanosine 5'-triphosphate. In Rhodobacter capsulatus (Rhodopseudomonas capsulata), this protein is GTP 3',8-cyclase.